We begin with the raw amino-acid sequence, 694 residues long: Glycine--tRNA ligase beta subunit (694 aa).

The protein belongs to the class-II aminoacyl-tRNA synthetase family. Tetramer of two alpha and two beta subunits.

The protein localises to the cytoplasm. The catalysed reaction is tRNA(Gly) + glycine + ATP = glycyl-tRNA(Gly) + AMP + diphosphate. This chain is Glycine--tRNA ligase beta subunit, found in Lactiplantibacillus plantarum (strain ATCC BAA-793 / NCIMB 8826 / WCFS1) (Lactobacillus plantarum).